The chain runs to 204 residues: Allurin (204 aa).

The N-terminal stretch at 1-19 is a signal peptide; it reads MDTFNFIICISALFHSTYG. The SCP domain occupies 36 to 138; that stretch reads VDLHNLLRRS…DKMIGHYTQV (103 aa). Residues 140 to 161 form a helical membrane-spanning segment; that stretch reads WAKTYLLGCGLAFCPGNYYPYV.

Belongs to the CRISP family. In terms of tissue distribution, expressed only in oviduct.

It is found in the membrane. Its subcellular location is the secreted. In terms of biological role, involved in sperm chemoattraction. This Xenopus tropicalis (Western clawed frog) protein is Allurin (crisp-a).